Consider the following 480-residue polypeptide: Glycogen synthase (480 aa).

Lys-15 lines the ADP-alpha-D-glucose pocket.

It belongs to the glycosyltransferase 1 family. Bacterial/plant glycogen synthase subfamily.

It catalyses the reaction [(1-&gt;4)-alpha-D-glucosyl](n) + ADP-alpha-D-glucose = [(1-&gt;4)-alpha-D-glucosyl](n+1) + ADP + H(+). It participates in glycan biosynthesis; glycogen biosynthesis. Synthesizes alpha-1,4-glucan chains using ADP-glucose. The protein is Glycogen synthase of Rhizobium tropici.